A 215-amino-acid polypeptide reads, in one-letter code: uncharacterized protein (215 aa).

It belongs to the mimivirus L31/R44 family.

This is an uncharacterized protein from Acanthamoeba polyphaga (Amoeba).